The sequence spans 91 residues: C-C motif chemokine 5 (91 aa).

The N-terminal stretch at methionine 1–alanine 23 is a signal peptide. Intrachain disulfides connect cysteine 33-cysteine 57 and cysteine 34-cysteine 73.

The protein belongs to the intercrine beta (chemokine CC) family.

Its subcellular location is the secreted. Functionally, chemoattractant for blood monocytes, memory T-helper cells and eosinophils. Causes the release of histamine from basophils and activates eosinophils. May activate several chemokine receptors including CCR1, CCR3, CCR4 and CCR5. May also be an agonist of the G protein-coupled receptor GPR75. Together with GPR75, may play a role in neuron survival through activation of a downstream signaling pathway involving the PI3, Akt and MAP kinases. By activating GPR75 may also play a role in insulin secretion by islet cells. The chain is C-C motif chemokine 5 (CCL5) from Bos taurus (Bovine).